Here is a 121-residue protein sequence, read N- to C-terminus: NADH-quinone oxidoreductase subunit A (121 aa).

Transmembrane regions (helical) follow at residues 8 to 28, 65 to 85, and 93 to 113; these read YLPIFMQMGLAVGFVVLTIIG, LVAILFVLFDVEVIFLYPWAI, and QGMIKMVIFMSLLLVGFFYII.

This sequence belongs to the complex I subunit 3 family. NDH-1 is composed of 14 different subunits. Subunits NuoA, H, J, K, L, M, N constitute the membrane sector of the complex.

It is found in the cell inner membrane. It carries out the reaction a quinone + NADH + 5 H(+)(in) = a quinol + NAD(+) + 4 H(+)(out). Its function is as follows. NDH-1 shuttles electrons from NADH, via FMN and iron-sulfur (Fe-S) centers, to quinones in the respiratory chain. The immediate electron acceptor for the enzyme in this species is believed to be a menaquinone. Couples the redox reaction to proton translocation (for every two electrons transferred, four hydrogen ions are translocated across the cytoplasmic membrane), and thus conserves the redox energy in a proton gradient. This chain is NADH-quinone oxidoreductase subunit A, found in Flavobacterium psychrophilum (strain ATCC 49511 / DSM 21280 / CIP 103535 / JIP02/86).